The sequence spans 1075 residues: Error-prone DNA polymerase (1075 aa).

The protein belongs to the DNA polymerase type-C family. DnaE2 subfamily.

It is found in the cytoplasm. The enzyme catalyses DNA(n) + a 2'-deoxyribonucleoside 5'-triphosphate = DNA(n+1) + diphosphate. In terms of biological role, DNA polymerase involved in damage-induced mutagenesis and translesion synthesis (TLS). It is not the major replicative DNA polymerase. The polypeptide is Error-prone DNA polymerase (Ralstonia nicotianae (strain ATCC BAA-1114 / GMI1000) (Ralstonia solanacearum)).